The sequence spans 553 residues: Phenylalanine--tRNA ligase alpha subunit (553 aa).

Positions 400 and 479 each coordinate L-phenylalanine. Mg(2+) is bound at residue glutamate 481.

It belongs to the class-II aminoacyl-tRNA synthetase family. Phe-tRNA synthetase alpha subunit type 2 subfamily. In terms of assembly, tetramer of two alpha and two beta subunits. Mg(2+) is required as a cofactor.

Its subcellular location is the cytoplasm. The catalysed reaction is tRNA(Phe) + L-phenylalanine + ATP = L-phenylalanyl-tRNA(Phe) + AMP + diphosphate + H(+). This chain is Phenylalanine--tRNA ligase alpha subunit, found in Treponema pallidum (strain Nichols).